The chain runs to 73 residues: Conotoxin Leo-O2 (73 aa).

Positions 1–22 are cleaved as a signal peptide; it reads MKLTCVLIIAVLFLTACQLVTA. Positions 23 to 47 are excised as a propeptide; the sequence is DYSGDEQQYRAMRLIDAMRNFGDTR. Disulfide bonds link C49/C59, C56/C64, and C58/C69.

Belongs to the conotoxin O1 superfamily. In terms of tissue distribution, expressed by the venom duct.

It is found in the secreted. The sequence is that of Conotoxin Leo-O2 from Conus leopardus (Leopard cone).